The primary structure comprises 273 residues: Thiazole synthase (273 aa).

The active-site Schiff-base intermediate with DXP is K110. 1-deoxy-D-xylulose 5-phosphate is bound by residues G171, 197-198, and 219-220; these read AG and NT. Positions 251-273 are disordered; that stretch reads MAAQDSAQPSTPVLGTPFWHHAP.

The protein belongs to the ThiG family. In terms of assembly, homotetramer. Forms heterodimers with either ThiH or ThiS.

It localises to the cytoplasm. The enzyme catalyses [ThiS sulfur-carrier protein]-C-terminal-Gly-aminoethanethioate + 2-iminoacetate + 1-deoxy-D-xylulose 5-phosphate = [ThiS sulfur-carrier protein]-C-terminal Gly-Gly + 2-[(2R,5Z)-2-carboxy-4-methylthiazol-5(2H)-ylidene]ethyl phosphate + 2 H2O + H(+). It functions in the pathway cofactor biosynthesis; thiamine diphosphate biosynthesis. Functionally, catalyzes the rearrangement of 1-deoxy-D-xylulose 5-phosphate (DXP) to produce the thiazole phosphate moiety of thiamine. Sulfur is provided by the thiocarboxylate moiety of the carrier protein ThiS. In vitro, sulfur can be provided by H(2)S. This chain is Thiazole synthase, found in Variovorax paradoxus (strain S110).